A 513-amino-acid chain; its full sequence is ATP synthase subunit alpha (513 aa).

169-176 serves as a coordination point for ATP; sequence GDRQIGKT.

It belongs to the ATPase alpha/beta chains family. In terms of assembly, F-type ATPases have 2 components, CF(1) - the catalytic core - and CF(0) - the membrane proton channel. CF(1) has five subunits: alpha(3), beta(3), gamma(1), delta(1), epsilon(1). CF(0) has three main subunits: a(1), b(2) and c(9-12). The alpha and beta chains form an alternating ring which encloses part of the gamma chain. CF(1) is attached to CF(0) by a central stalk formed by the gamma and epsilon chains, while a peripheral stalk is formed by the delta and b chains.

The protein localises to the cell inner membrane. The catalysed reaction is ATP + H2O + 4 H(+)(in) = ADP + phosphate + 5 H(+)(out). Functionally, produces ATP from ADP in the presence of a proton gradient across the membrane. The alpha chain is a regulatory subunit. This chain is ATP synthase subunit alpha, found in Vibrio alginolyticus.